The sequence spans 324 residues: DNA-directed RNA polymerase subunit alpha (324 aa).

The segment at 1–228 (MIEIQKPTIR…EHFNLFTDLS (228 aa)) is alpha N-terminal domain (alpha-NTD). The tract at residues 245–324 (RNKLLDMTIE…STPKGEEEEK (80 aa)) is alpha C-terminal domain (alpha-CTD).

It belongs to the RNA polymerase alpha chain family. Homodimer. The RNAP catalytic core consists of 2 alpha, 1 beta, 1 beta' and 1 omega subunit. When a sigma factor is associated with the core the holoenzyme is formed, which can initiate transcription.

It catalyses the reaction RNA(n) + a ribonucleoside 5'-triphosphate = RNA(n+1) + diphosphate. Its function is as follows. DNA-dependent RNA polymerase catalyzes the transcription of DNA into RNA using the four ribonucleoside triphosphates as substrates. This chain is DNA-directed RNA polymerase subunit alpha, found in Caldicellulosiruptor saccharolyticus (strain ATCC 43494 / DSM 8903 / Tp8T 6331).